A 167-amino-acid polypeptide reads, in one-letter code: MLFDLKLLEDKRGKVSEIKGSIIKSLDILENKRIISVGDRVTRELLGSGRRPEVAIIDLKERREMNCSTIFYLDDYLILVARNPAGTLMREAWLKVRKAIEISLSGKNAAVIVDGEEDLLGFPAIILPPEGWVMVYGQPGVGMVSVNIDRKAREEAMNLLQEAFLPI.

Positions 39, 41, 58, 60, and 117 each coordinate GTP.

This sequence belongs to the GTP-dependent DPCK family.

The enzyme catalyses 3'-dephospho-CoA + GTP = GDP + CoA + H(+). It functions in the pathway cofactor biosynthesis; coenzyme A biosynthesis. Functionally, catalyzes the GTP-dependent phosphorylation of the 3'-hydroxyl group of dephosphocoenzyme A to form coenzyme A (CoA). This is GTP-dependent dephospho-CoA kinase from Korarchaeum cryptofilum (strain OPF8).